We begin with the raw amino-acid sequence, 681 residues long: MGDIERTDARFEVISEYEPAGDQPAAIEELDARLSRGERDVVLLGATGTGKSATAAWLIEQQQRPTLVMAPNKTLAAQLANELRQLLPNNAVEYFVSYYDYYQPEAYIAQTDTYIEKDSSINDDVERLRHRATSSLLSRRDVVVVSSVSCIYGLGTPQSYLDRSVVLRVDEEVERDRFLRLLVDIQYDRNDVGFTRGTFRVKGDTVDIIPAYEEVAVRVEFFGDDIDALYYIHPLTGDVIRQVDEVRIFPATHYVAGPERMAKAVEDIKAELRDRLEDLENRGKLLEAQRLRMRTEYDLEMIEQVGFCSGIENYSRHLDGRPAGSAPATLLDYFPEDFLTIIDESHVTVPQIGGMFEGDMSRKRNLVEFGFRLPSALDNRPLKWEEFEQRVGQTVYMSATPGDYELAASGGEYVEQVIRPTGLVDPEIDVRPTRGQIDDLIHEIKQRTTKDERVLVTTLTKKMAEDLTDYLLENGIRVRYLHSDIDTLQRVELLRQLRLGEYDVLVGINLLREGLDLPEVSLVAILDADKEGFLRSTKSLIQTIGRAARNVSGTVIMYADKITDSMQYAIDETERRREKQIAYNKEHGIDPQPLRKKIADILEQVQESKAESTAPSSDAVVVSKTNTSSMPVAELRSLIDDLTTQMGTAARELKFELAGRLRDEIAELKKELRGMEEIGLA.

The Helicase ATP-binding domain occupies 32–419; sequence ARLSRGERDV…GGEYVEQVIR (388 aa). 45 to 52 lines the ATP pocket; it reads GATGTGKS. The Beta-hairpin motif lies at 98–121; it reads YYDYYQPEAYIAQTDTYIEKDSSI. Residues 436 to 602 enclose the Helicase C-terminal domain; that stretch reads QIDDLIHEIK…PLRKKIADIL (167 aa). Over residues 607-616 the composition is skewed to polar residues; that stretch reads ESKAESTAPS. Residues 607–626 form a disordered region; that stretch reads ESKAESTAPSSDAVVVSKTN. The UVR domain maps to 636–671; the sequence is RSLIDDLTTQMGTAARELKFELAGRLRDEIAELKKE.

It belongs to the UvrB family. As to quaternary structure, forms a heterotetramer with UvrA during the search for lesions. Interacts with UvrC in an incision complex.

It is found in the cytoplasm. In terms of biological role, the UvrABC repair system catalyzes the recognition and processing of DNA lesions. A damage recognition complex composed of 2 UvrA and 2 UvrB subunits scans DNA for abnormalities. Upon binding of the UvrA(2)B(2) complex to a putative damaged site, the DNA wraps around one UvrB monomer. DNA wrap is dependent on ATP binding by UvrB and probably causes local melting of the DNA helix, facilitating insertion of UvrB beta-hairpin between the DNA strands. Then UvrB probes one DNA strand for the presence of a lesion. If a lesion is found the UvrA subunits dissociate and the UvrB-DNA preincision complex is formed. This complex is subsequently bound by UvrC and the second UvrB is released. If no lesion is found, the DNA wraps around the other UvrB subunit that will check the other stand for damage. The polypeptide is UvrABC system protein B (Corynebacterium diphtheriae (strain ATCC 700971 / NCTC 13129 / Biotype gravis)).